Consider the following 117-residue polypeptide: MTKNIHDVAYELQKTIAENEDFQTLKASYAAVQGDAESKNLFEEFRAMQLGLQQKMMQGQEITEEDNQKAQEVVARIQQDAKITKLMETEQRLNIVITDVNKIIMKPLEELYSAQQA.

This sequence belongs to the UPF0342 family.

The protein is UPF0342 protein BcerKBAB4_0767 of Bacillus mycoides (strain KBAB4) (Bacillus weihenstephanensis).